The chain runs to 344 residues: Small ribosomal subunit protein bS1m (344 aa).

The residue at position 327 (Ser327) is a Phosphoserine.

Belongs to the bacterial ribosomal protein bS1 family. Component of the mitochondrial small ribosomal subunit (mt-SSU). Mature yeast 74S mitochondrial ribosomes consist of a small (37S) and a large (54S) subunit. The 37S small subunit contains a 15S ribosomal RNA (15S mt-rRNA) and 34 different proteins. The 54S large subunit contains a 21S rRNA (21S mt-rRNA) and 46 different proteins.

Its subcellular location is the mitochondrion. Its function is as follows. Component of the mitochondrial ribosome (mitoribosome), a dedicated translation machinery responsible for the synthesis of mitochondrial genome-encoded proteins, including at least some of the essential transmembrane subunits of the mitochondrial respiratory chain. The mitoribosomes are attached to the mitochondrial inner membrane and translation products are cotranslationally integrated into the membrane. bS1m functionally interacts with the 5'-UTR of mitochondrial mRNAs. This Saccharomyces cerevisiae (strain ATCC 204508 / S288c) (Baker's yeast) protein is Small ribosomal subunit protein bS1m (MRP51).